A 534-amino-acid polypeptide reads, in one-letter code: MLRYLLIPILYLQVVLGVLSEVLPSLKPSVVPKNTSLLSGRGVFRQLIDHTHPEVGTFSQKYWFNTTYWGGPGSPIIFYTPGQHPATNRLYYLTDTTLPGLIAKEVRGAVVLVEHRYFGESQPFDNLSTSNLQYLALDQVLADFVHFARTVELPFDLSGNSHPLRTPWIWVGNSYSATLVAWTERLFPNTFWAYYASGAAVNSMQDFWQFNYPTQQGMPQSCRSNLEAIISHVDNVFLSGSPEQKQELKIRFGLQDLSLLEDTAYALSQPIIGWTLIQPSDTHTQFSEMCNAIENANFSSSRRDFGSKTNFQTVLDNYADWFKTSYLPRLCERPNYSGWTGRNSVQCLDTVNLSSQAFHDLSVQNDDRVWDWIACNYFFFWQTGSPIDTPTIFSRLIDPVYYERRCRLIFPKEGNATYGIAAGVTDKSMNALTGGWNRTGKRILFTNGEFDPWRSASVSSVFRPDGPMQSTSQQPIILIKGVQHQADMYVRNRINKEVREAMDTGIAQISRWVLDFYTENSKTLAHDLQGFCVH.

Residues 1–17 (MLRYLLIPILYLQVVLG) form the signal peptide. N-linked (GlcNAc...) asparagine glycans are attached at residues asparagine 34, asparagine 65, and asparagine 126. Serine 174 serves as the catalytic Charge relay system. Residues asparagine 297, asparagine 335, asparagine 352, asparagine 415, and asparagine 437 are each glycosylated (N-linked (GlcNAc...) asparagine). Aspartate 451 acts as the Charge relay system in catalysis.

It belongs to the peptidase S28 family.

It functions in the pathway mycotoxin biosynthesis. In terms of biological role, serine protease, part of the gene cluster that mediates the biosynthesis of the secondary metabolite victorin, the molecular basis for Victoria blight of oats. Within the pathway, vicPa and vicPb are probably involved in the processing of the vicA1 and vicA2 precursors. The pathway starts with the processing of the precursor vicA1 by several endopeptidases including kexin proteases as well as the cluster-specific S28 family peptidases vicPa and vicPb to produce 7 identical copies of the hexapeptide Gly-Leu-Lys-Leu-Ala-Phe. After being excised from the precursor peptide, the core peptides are cyclized and modified post-translationally by enzymes encoded within the gene cluster. The ustYa family oxidase vicYb is required for the formation of the macrocycle in victorin and the copper amine oxidases (CAOs) vicK1 and vicK2 are responsible for converting victorin to the active form by oxidizing the N-terminal glycyl residue in the peptides to glyoxylate. Relaxed substrate specificity of enzymes in the victorin biosynthetic pathway results in a metabolic grid that produces a set of analogs including victorinines B, C, E or HV-toxin M. The protein is Serine protease vicPb of Bipolaris victoriae (strain FI3) (Victoria blight of oats agent).